Here is a 263-residue protein sequence, read N- to C-terminus: Probable esterase PIR7A (263 aa).

Residue S82 is the Acyl-ester intermediate of the active site. Residues D213 and H241 each act as charge relay system in the active site.

It belongs to the AB hydrolase superfamily.

The protein is Probable esterase PIR7A (PIR7A) of Oryza sativa subsp. indica (Rice).